The primary structure comprises 338 residues: MELPILPTSVIGSYPKPRWLLRMYKLRELGKIPEEDFKEAVKDASVAVLREHERAGVDIPWDGEMWRSEMTEHFTAKISGFKFYGPVRVWGNAYFNKAAAVDKLEYKEPLVLEEFLWVRENTTREIVKVPITGPYTIAEWSFNEYYPDKESFVMDLAKIINKELKTLEEHGATYIQLDEPAMLNHPDEVPLAVEAINRAVKGIKIKVGLHVCYSNYYLLADYFDDIRVTQFALEFANRQFRDMDFLKKLSGKELGFGVVDVHNPRIETVDEIVRAIKKAFNYLEPEWLYINPDCGLKLLDRRIAYQKLVNMVKAVRIVRKELEKEGRAETEFRTLNDI.

4 residues coordinate Zn(2+): His-210, Cys-212, Glu-234, and Cys-294.

The protein belongs to the archaeal MetE family. The cofactor is Zn(2+).

It participates in amino-acid biosynthesis; L-methionine biosynthesis via de novo pathway. Functionally, catalyzes the transfer of a methyl group to L-homocysteine resulting in methionine formation. The physiological methyl donor is unknown. The protein is Methionine synthase of Pyrococcus abyssi (strain GE5 / Orsay).